A 955-amino-acid polypeptide reads, in one-letter code: 2-oxoglutarate dehydrogenase E1 component (955 aa).

It belongs to the alpha-ketoglutarate dehydrogenase family. As to quaternary structure, homodimer. Part of the 2-oxoglutarate dehydrogenase (OGDH) complex composed of E1 (2-oxoglutarate dehydrogenase), E2 (dihydrolipoamide succinyltransferase) and E3 (dihydrolipoamide dehydrogenase); the complex contains multiple copies of the three enzymatic components (E1, E2 and E3). It depends on thiamine diphosphate as a cofactor.

The enzyme catalyses N(6)-[(R)-lipoyl]-L-lysyl-[protein] + 2-oxoglutarate + H(+) = N(6)-[(R)-S(8)-succinyldihydrolipoyl]-L-lysyl-[protein] + CO2. Its function is as follows. E1 component of the 2-oxoglutarate dehydrogenase (OGDH) complex which catalyzes the decarboxylation of 2-oxoglutarate, the first step in the conversion of 2-oxoglutarate to succinyl-CoA and CO(2). This chain is 2-oxoglutarate dehydrogenase E1 component, found in Bacillus cereus (strain ZK / E33L).